Here is a 397-residue protein sequence, read N- to C-terminus: P-selectin glycoprotein ligand 1 (397 aa).

Positions 1–17 (MSPSFLVLLTILGPGNS) are cleaved as a signal peptide. Positions 18 to 41 (LQLQDPWGHETKEAPGPVHLRERR) are excised as a propeptide. Residues 18-307 (LQLQDPWGHE…SSDLIPVKQC (290 aa)) are Extracellular-facing. Residue Tyr54 is modified to Sulfotyrosine. O-linked (GalNAc...) threonine glycosylation occurs at Thr58. Residue Asn66 is glycosylated (N-linked (GlcNAc...) asparagine). Residues 89 to 261 (TSAGTSERAT…TMETASTESN (173 aa)) are disordered. Over residues 120–198 (STDSATQWSL…PMEAETSQPA (79 aa)) the composition is skewed to polar residues. 10 tandem repeats follow at residues 126-135 (QWSLTSVETV), 136-145 (QPASTEVETS), 146-155 (QPAPMEAETS), 156-165 (QPAPMEAETS), 166-175 (QPAPMEAETS), 176-185 (QPAPMEADTS), 186-195 (QPAPMEAETS), 196-205 (QPAPNEAETS), 206-215 (KPAPTEAETS), and 216-225 (KPAPTEAETT). The 10 X 10 AA tandem repeats stretch occupies residues 126–225 (QWSLTSVETV…KPAPTEAETT (100 aa)). A compositionally biased stretch (polar residues) spans 236–261 (LFTTSAATEVPSTEPTTMETASTESN). An N-linked (GlcNAc...) asparagine glycan is attached at Asn261. A helical transmembrane segment spans residues 308-328 (LLIILILASLATIFLVCTVVL). At 329–397 (AVRLSRKTHM…DDLTLHSFLP (69 aa)) the chain is on the cytoplasmic side. Positions 364–390 (PVTANGGLPKVQDLKTEPSGDRDGDDL) are disordered. Residues 375-390 (QDLKTEPSGDRDGDDL) are compositionally biased toward basic and acidic residues. Thr391 is modified (phosphothreonine). Ser394 is modified (phosphoserine).

As to quaternary structure, homodimer; disulfide-linked. Interacts with P- and E-selectins, through their lectin/EGF domains. Interaction with P-selectin requires sialyl Lewis X glycan modification and tyrosine sulfation, probably on Tyr-54, for high affinity binding. Dimerization appears not to be required for P-selectin/SELP binding. Interacts with SNX20. Interacts with MSN and SYK; mediates SYK activation downstream of SELPLG. Interacts with HAVCR1. Displays complex, core-2, sialylated and fucosylated O-linked oligosaccharides, at least some of which appear to contain poly-N-acetyllactosamine with varying degrees of substitution. Mainly disialylated or neutral forms of the core-2 tetrasaccharide, Galbeta1--&gt;4GlcNAcbeta1--&gt;6(Galbeta1--&gt;3)GalNAcOH. The GlcN:GalN ratio is approximately 2:1 and the Man:Fuc ratio 3:5. Contains about 14% fucose with alpha-1,3 linkage present in two forms: One species is a disialylated, monofucosylated glycan, and the other, a monosialylated, trifucosylated glycan with a polylactosamine backbone. The fucosylated forms carry the Lewis antigen and are important for interaction with selectins and for functioning. No sulfated O-glycans. Some N-glycosylation. Highly expressed in blood, bone marrow, brain, adipose tissue, spleen, and thymus. Also expressed in heart, kidney, liver, muscle, ovary, and stomach.

The protein resides in the cell membrane. Its function is as follows. An SLe(x)-type proteoglycan, which through high affinity, calcium-dependent interactions with E- and P-selectins, mediates rapid rolling of leukocytes over vascular surfaces during the initial steps in inflammation. Critical for the initial leukocyte capture. The polypeptide is P-selectin glycoprotein ligand 1 (Selplg) (Mus musculus (Mouse)).